Here is a 130-residue protein sequence, read N- to C-terminus: Holo-[acyl-carrier-protein] synthase (130 aa).

Mg(2+)-binding residues include D8 and E62.

This sequence belongs to the P-Pant transferase superfamily. AcpS family. Mg(2+) is required as a cofactor.

Its subcellular location is the cytoplasm. It catalyses the reaction apo-[ACP] + CoA = holo-[ACP] + adenosine 3',5'-bisphosphate + H(+). Transfers the 4'-phosphopantetheine moiety from coenzyme A to a Ser of acyl-carrier-protein. In Acidovorax ebreus (strain TPSY) (Diaphorobacter sp. (strain TPSY)), this protein is Holo-[acyl-carrier-protein] synthase.